We begin with the raw amino-acid sequence, 77 residues long: Acyl carrier protein (77 aa).

Residues 1–76 enclose the Carrier domain; that stretch reads MAVFDEVKDV…DVVNYIDGLK (76 aa). At Ser-36 the chain carries O-(pantetheine 4'-phosphoryl)serine.

The protein belongs to the acyl carrier protein (ACP) family. 4'-phosphopantetheine is transferred from CoA to a specific serine of apo-ACP by AcpS. This modification is essential for activity because fatty acids are bound in thioester linkage to the sulfhydryl of the prosthetic group.

It localises to the cytoplasm. Its pathway is lipid metabolism; fatty acid biosynthesis. Its function is as follows. Carrier of the growing fatty acid chain in fatty acid biosynthesis. The protein is Acyl carrier protein of Campylobacter fetus subsp. fetus (strain 82-40).